The following is a 668-amino-acid chain: Bifunctional polymyxin resistance protein ArnA (668 aa).

The tract at residues 1 to 307 (MSNKAVVFAY…ELGLVDGSLL (307 aa)) is formyltransferase ArnAFT. Histidine 106 (proton donor; for formyltransferase activity) is an active-site residue. (6R)-10-formyltetrahydrofolate is bound by residues arginine 116 and 138-142 (VKRAD). The segment at 317–668 (RRTRVLILGV…IADRAKQEAR (352 aa)) is dehydrogenase ArnADH. NAD(+)-binding positions include aspartate 350 and 371–372 (DI). Residues alanine 396, tyrosine 401, and 435 to 436 (TS) each bind UDP-alpha-D-glucuronate. Glutamate 437 acts as the Proton acceptor; for decarboxylase activity in catalysis. UDP-alpha-D-glucuronate contacts are provided by residues arginine 463, asparagine 494, 528 to 537 (RLFDGGEQKR), and tyrosine 615. The active-site Proton donor; for decarboxylase activity is arginine 621.

The protein in the N-terminal section; belongs to the Fmt family. UDP-L-Ara4N formyltransferase subfamily. This sequence in the C-terminal section; belongs to the NAD(P)-dependent epimerase/dehydratase family. UDP-glucuronic acid decarboxylase subfamily. In terms of assembly, homohexamer, formed by a dimer of trimers.

It catalyses the reaction UDP-alpha-D-glucuronate + NAD(+) = UDP-beta-L-threo-pentopyranos-4-ulose + CO2 + NADH. It carries out the reaction UDP-4-amino-4-deoxy-beta-L-arabinose + (6R)-10-formyltetrahydrofolate = UDP-4-deoxy-4-formamido-beta-L-arabinose + (6S)-5,6,7,8-tetrahydrofolate + H(+). It participates in nucleotide-sugar biosynthesis; UDP-4-deoxy-4-formamido-beta-L-arabinose biosynthesis; UDP-4-deoxy-4-formamido-beta-L-arabinose from UDP-alpha-D-glucuronate: step 1/3. Its pathway is nucleotide-sugar biosynthesis; UDP-4-deoxy-4-formamido-beta-L-arabinose biosynthesis; UDP-4-deoxy-4-formamido-beta-L-arabinose from UDP-alpha-D-glucuronate: step 3/3. It functions in the pathway bacterial outer membrane biogenesis; lipopolysaccharide biosynthesis. In terms of biological role, bifunctional enzyme that catalyzes the oxidative decarboxylation of UDP-glucuronic acid (UDP-GlcUA) to UDP-4-keto-arabinose (UDP-Ara4O) and the addition of a formyl group to UDP-4-amino-4-deoxy-L-arabinose (UDP-L-Ara4N) to form UDP-L-4-formamido-arabinose (UDP-L-Ara4FN). The modified arabinose is attached to lipid A and is required for resistance to polymyxin and cationic antimicrobial peptides. The protein is Bifunctional polymyxin resistance protein ArnA of Pseudomonas fluorescens (strain ATCC BAA-477 / NRRL B-23932 / Pf-5).